A 374-amino-acid chain; its full sequence is Ribosomal RNA large subunit methyltransferase M (374 aa).

Residues S188, 221–224 (CPGG), D240, D260, and D276 each bind S-adenosyl-L-methionine. K305 acts as the Proton acceptor in catalysis.

This sequence belongs to the class I-like SAM-binding methyltransferase superfamily. RNA methyltransferase RlmE family. RlmM subfamily. As to quaternary structure, monomer.

The protein resides in the cytoplasm. The catalysed reaction is cytidine(2498) in 23S rRNA + S-adenosyl-L-methionine = 2'-O-methylcytidine(2498) in 23S rRNA + S-adenosyl-L-homocysteine + H(+). In terms of biological role, catalyzes the 2'-O-methylation at nucleotide C2498 in 23S rRNA. In Edwardsiella ictaluri (strain 93-146), this protein is Ribosomal RNA large subunit methyltransferase M.